A 34-amino-acid chain; its full sequence is MVEPLLSGIVLGLVPVTLAGLFVTAYLQYRRGDV.

The chain crosses the membrane as a helical span at residues 5 to 25; that stretch reads LLSGIVLGLVPVTLAGLFVTA.

Belongs to the PetG family. In terms of assembly, the 4 large subunits of the cytochrome b6-f complex are cytochrome b6, subunit IV (17 kDa polypeptide, PetD), cytochrome f and the Rieske protein, while the 4 small subunits are PetG, PetL, PetM and PetN. The complex functions as a dimer.

It localises to the plastid. The protein resides in the chloroplast thylakoid membrane. Its function is as follows. Component of the cytochrome b6-f complex, which mediates electron transfer between photosystem II (PSII) and photosystem I (PSI), cyclic electron flow around PSI, and state transitions. PetG is required for either the stability or assembly of the cytochrome b6-f complex. In Oltmannsiellopsis viridis (Marine flagellate), this protein is Cytochrome b6-f complex subunit 5.